The chain runs to 216 residues: Protein Syd (216 aa).

The protein belongs to the Syd family.

It localises to the cell inner membrane. Its function is as follows. Interacts with the SecY protein in vivo. May bind preferentially to an uncomplexed state of SecY, thus functioning either as a chelating agent for excess SecY in the cell or as a regulatory factor that negatively controls the translocase function. This chain is Protein Syd, found in Shewanella putrefaciens (strain CN-32 / ATCC BAA-453).